The sequence spans 509 residues: Scavenger receptor class B member 1 (509 aa).

At 1 to 11 the chain is on the cytoplasmic side; it reads MGGSSRARWVA. A helical membrane pass occupies residues 12-32; the sequence is LGLGALGLLFAALGVVMILMV. Over 33-440 the chain is Extracellular; sequence PSLIKQQVLK…YTQLVLMPQV (408 aa). N-linked (GlcNAc...) asparagine glycans are attached at residues Asn-102, Asn-108, Asn-116, Asn-173, Asn-212, Asn-227, Asn-255, Asn-288, Asn-310, Asn-330, and Asn-383. A disulfide bond links Cys-251 and Cys-384. A helical transmembrane segment spans residues 441 to 461; sequence LHYAQYVLLGLGGLLLLVPII. Cys-462 carries the S-palmitoyl cysteine lipid modification. Residues 462 to 509 are Cytoplasmic-facing; it reads CQLRSQEKCFLFWSGSKKGSQDKEAIQAYSESLMSPAAKGTVLQEAKL.

This sequence belongs to the CD36 family. The C-terminal region binds to PDZK1. Post-translationally, N-glycosylated. The six cysteines of the extracellular domain are all involved in intramolecular disulfide bonds. Expressed primarily in liver, ovary and adrenal gland, and, at lower levels in other non-placental steroidogenic tissues, including adipose tissue, mammary gland and testis (at protein level). Isoform 2 is expressed at lower levels than isoform 1 in liver, testis and adrenal gland. At the mRNA, but not at the protein level, isoform 2 is the predominant isoform in testis (80%).

The protein resides in the cell membrane. It is found in the membrane. It localises to the caveola. In terms of biological role, receptor for different ligands such as phospholipids, cholesterol ester, lipoproteins, phosphatidylserine and apoptotic cells. Both isoform 1 and isoform 2 act as receptors for HDL, mediating selective uptake of cholesteryl ether and HDL-dependent cholesterol efflux. Also facilitates the flux of free and esterified cholesterol between the cell surface and apoB-containing lipoproteins and modified lipoproteins, although less efficiently than HDL. May be involved in the phagocytosis of apoptotic cells, via its phosphatidylserine binding activity. The chain is Scavenger receptor class B member 1 (Scarb1) from Mus musculus (Mouse).